We begin with the raw amino-acid sequence, 355 residues long: GTPase Obg (355 aa).

Positions 1-159 (MKFLDEAKVY…KTIWLRLKLI (159 aa)) constitute an Obg domain. The OBG-type G domain occupies 160–327 (ADAGLVGLPN…ALRALRDIIV (168 aa)). GTP contacts are provided by residues 166–173 (GLPNAGKS), 191–195 (FTTLH), 212–215 (DIPG), 279–282 (SQID), and 308–310 (SAA). Ser173 and Thr193 together coordinate Mg(2+). The interval 333–355 (GDTALPDRSMPHESEVEEEDDRL) is disordered.

This sequence belongs to the TRAFAC class OBG-HflX-like GTPase superfamily. OBG GTPase family. As to quaternary structure, monomer. Mg(2+) is required as a cofactor.

It is found in the cytoplasm. Functionally, an essential GTPase which binds GTP, GDP and possibly (p)ppGpp with moderate affinity, with high nucleotide exchange rates and a fairly low GTP hydrolysis rate. Plays a role in control of the cell cycle, stress response, ribosome biogenesis and in those bacteria that undergo differentiation, in morphogenesis control. The chain is GTPase Obg from Agrobacterium fabrum (strain C58 / ATCC 33970) (Agrobacterium tumefaciens (strain C58)).